We begin with the raw amino-acid sequence, 164 residues long: Protein-export protein SecB (164 aa).

This sequence belongs to the SecB family. Homotetramer, a dimer of dimers. One homotetramer interacts with 1 SecA dimer.

Its subcellular location is the cytoplasm. In terms of biological role, one of the proteins required for the normal export of preproteins out of the cell cytoplasm. It is a molecular chaperone that binds to a subset of precursor proteins, maintaining them in a translocation-competent state. It also specifically binds to its receptor SecA. The polypeptide is Protein-export protein SecB (Caulobacter sp. (strain K31)).